The following is a 378-amino-acid chain: Lipid-A-disaccharide synthase (378 aa).

It belongs to the LpxB family.

The catalysed reaction is a lipid X + a UDP-2-N,3-O-bis[(3R)-3-hydroxyacyl]-alpha-D-glucosamine = a lipid A disaccharide + UDP + H(+). It functions in the pathway bacterial outer membrane biogenesis; LPS lipid A biosynthesis. Functionally, condensation of UDP-2,3-diacylglucosamine and 2,3-diacylglucosamine-1-phosphate to form lipid A disaccharide, a precursor of lipid A, a phosphorylated glycolipid that anchors the lipopolysaccharide to the outer membrane of the cell. In Pseudomonas aeruginosa (strain LESB58), this protein is Lipid-A-disaccharide synthase.